The following is a 600-amino-acid chain: Aspartate--tRNA(Asp/Asn) ligase (600 aa).

An L-aspartate-binding site is contributed by glutamate 174. Positions 198–201 (QLFK) are aspartate. L-aspartate is bound at residue arginine 220. Residues 220–222 (RDE) and glutamine 229 contribute to the ATP site. Histidine 457 lines the L-aspartate pocket. Glutamate 491 provides a ligand contact to ATP. Residue arginine 498 coordinates L-aspartate. 543-546 (GLDR) is a binding site for ATP.

The protein belongs to the class-II aminoacyl-tRNA synthetase family. Type 1 subfamily. As to quaternary structure, homodimer.

The protein localises to the cytoplasm. The catalysed reaction is tRNA(Asx) + L-aspartate + ATP = L-aspartyl-tRNA(Asx) + AMP + diphosphate. In terms of biological role, aspartyl-tRNA synthetase with relaxed tRNA specificity since it is able to aspartylate not only its cognate tRNA(Asp) but also tRNA(Asn). Reaction proceeds in two steps: L-aspartate is first activated by ATP to form Asp-AMP and then transferred to the acceptor end of tRNA(Asp/Asn). In Burkholderia vietnamiensis (strain G4 / LMG 22486) (Burkholderia cepacia (strain R1808)), this protein is Aspartate--tRNA(Asp/Asn) ligase.